The chain runs to 177 residues: Large ribosomal subunit protein uL6 (177 aa).

This sequence belongs to the universal ribosomal protein uL6 family. Part of the 50S ribosomal subunit.

This protein binds to the 23S rRNA, and is important in its secondary structure. It is located near the subunit interface in the base of the L7/L12 stalk, and near the tRNA binding site of the peptidyltransferase center. The polypeptide is Large ribosomal subunit protein uL6 (Pseudomonas putida (strain ATCC 700007 / DSM 6899 / JCM 31910 / BCRC 17059 / LMG 24140 / F1)).